The following is a 410-amino-acid chain: Argininosuccinate synthase (410 aa).

10-18 is a binding site for ATP; the sequence is AYSGGLDTS. L-citrulline-binding residues include Tyr88 and Ser93. ATP is bound at residue Gly118. Residues Thr120, Asn124, and Asp125 each contribute to the L-aspartate site. Asn124 lines the L-citrulline pocket. L-citrulline-binding residues include Arg128, Ser177, Ser186, Glu262, and Tyr274.

It belongs to the argininosuccinate synthase family. Type 1 subfamily. As to quaternary structure, homotetramer.

It localises to the cytoplasm. The catalysed reaction is L-citrulline + L-aspartate + ATP = 2-(N(omega)-L-arginino)succinate + AMP + diphosphate + H(+). It functions in the pathway amino-acid biosynthesis; L-arginine biosynthesis; L-arginine from L-ornithine and carbamoyl phosphate: step 2/3. This Thermoanaerobacter sp. (strain X514) protein is Argininosuccinate synthase.